We begin with the raw amino-acid sequence, 352 residues long: Uroporphyrinogen decarboxylase (352 aa).

Residues 26-30, D76, Y153, S208, and H323 contribute to the substrate site; that span reads RQAGR.

Belongs to the uroporphyrinogen decarboxylase family. Homodimer.

The protein localises to the cytoplasm. The enzyme catalyses uroporphyrinogen III + 4 H(+) = coproporphyrinogen III + 4 CO2. Its pathway is porphyrin-containing compound metabolism; protoporphyrin-IX biosynthesis; coproporphyrinogen-III from 5-aminolevulinate: step 4/4. Functionally, catalyzes the decarboxylation of four acetate groups of uroporphyrinogen-III to yield coproporphyrinogen-III. The polypeptide is Uroporphyrinogen decarboxylase (Prochlorococcus marinus (strain NATL1A)).